Reading from the N-terminus, the 382-residue chain is MGIKGLNAIISEHVPSAIRKSDIKSFFGRKVAIDASMSLYQFLIAVRQQDGGQLTNEAGETTSHLMGMFYRTLRMIDNGIKPCYVFDGKPPDLKSHELTKRSSRRVETEKKLAEATTELEKMKQERRLVKVSKEHNEEAQKLLGLMGIPYIIAPTEAEAQCAELAKKGKVYAAASEDMDTLCYRTPFLLRHLTFSETKKEPIHEIDTELVLRGLDLTIEQFVDLCIMLGCDYCESIRGVGPVTALKLIKTHGSIEKIVEFIESGESNNTKWKIPEDWPYKQARMLFLDPEVIDGNEINLKWSPPKEKELIEYLCDDKKFSEERVKSGISRLKKGLKSGIQGRLDGFFQVVPKTKEQLAAAAKRAQENKKLNKNKNKVTKGRR.

An N-domain region spans residues Met1–Arg105. Asp34 provides a ligand contact to Mg(2+). 2 residues coordinate DNA: Arg47 and Arg71. The Mg(2+) site is built by Asp87, Glu156, Glu158, Asp177, and Asp179. The segment at Glu120–His251 is I-domain. Glu156 is a DNA binding site. The DNA site is built by Gly229 and Asp231. Mg(2+) is bound at residue Asp231. The interaction with PCNA stretch occupies residues Ile339 to Phe347. Residues Ala358–Arg382 are disordered. Basic residues predominate over residues Leu370–Arg382.

The protein belongs to the XPG/RAD2 endonuclease family. FEN1 subfamily. As to quaternary structure, interacts with PCNA. Three molecules of RAD27 bind to one PCNA trimer with each molecule binding to one PCNA monomer. PCNA stimulates the nuclease activity without altering cleavage specificity. Requires Mg(2+) as cofactor. In terms of processing, phosphorylated. Phosphorylation upon DNA damage induces relocalization to the nuclear plasma.

It is found in the nucleus. The protein resides in the nucleolus. The protein localises to the nucleoplasm. Its subcellular location is the mitochondrion. Functionally, structure-specific nuclease with 5'-flap endonuclease and 5'-3' exonuclease activities involved in DNA replication and repair. During DNA replication, cleaves the 5'-overhanging flap structure that is generated by displacement synthesis when DNA polymerase encounters the 5'-end of a downstream Okazaki fragment. It enters the flap from the 5'-end and then tracks to cleave the flap base, leaving a nick for ligation. Also involved in the long patch base excision repair (LP-BER) pathway, by cleaving within the apurinic/apyrimidinic (AP) site-terminated flap. Acts as a genome stabilization factor that prevents flaps from equilibrating into structures that lead to duplications and deletions. Also possesses 5'-3' exonuclease activity on nicked or gapped double-stranded DNA, and exhibits RNase H activity. Also involved in replication and repair of rDNA and in repairing mitochondrial DNA. In Saccharomyces cerevisiae (strain RM11-1a) (Baker's yeast), this protein is Flap endonuclease 1.